Here is a 367-residue protein sequence, read N- to C-terminus: DNA replication and repair protein RecF (367 aa).

30–37 (GNNGEGKT) contacts ATP.

This sequence belongs to the RecF family.

It localises to the cytoplasm. Its function is as follows. The RecF protein is involved in DNA metabolism; it is required for DNA replication and normal SOS inducibility. RecF binds preferentially to single-stranded, linear DNA. It also seems to bind ATP. This Leptospira biflexa serovar Patoc (strain Patoc 1 / Ames) protein is DNA replication and repair protein RecF.